The primary structure comprises 297 residues: N-acetylmuramoyl-L-alanine amidase XlyA (297 aa).

The signal sequence occupies residues methionine 1–alanine 44. Residues arginine 45–arginine 140 form the N-acetylmuramoyl-L-alanine amidase domain. The LysM domain maps to glutamine 159–valine 203.

This sequence belongs to the N-acetylmuramoyl-L-alanine amidase 2 family.

The protein localises to the secreted. It catalyses the reaction Hydrolyzes the link between N-acetylmuramoyl residues and L-amino acid residues in certain cell-wall glycopeptides.. In terms of biological role, autolysins are involved in some important biological processes such as cell separation, cell-wall turnover, competence for genetic transformation, formation of the flagella and sporulation. In Bacillus subtilis (strain 168), this protein is N-acetylmuramoyl-L-alanine amidase XlyA (xlyA).